Here is a 377-residue protein sequence, read N- to C-terminus: Endoplasmic reticulum-Golgi intermediate compartment protein 2 (377 aa).

Residues 1–33 (MRRLNRKKTLSLVKELDAFPKVPESYVETSASG) lie on the Cytoplasmic side of the membrane. A helical membrane pass occupies residues 34–54 (GTVSLIAFTTMALLTIMEFSV). The Lumenal segment spans residues 55–319 (YQDTWMKYEY…PFWQFFVRLC (265 aa)). A helical transmembrane segment spans residues 320–340 (GIVGGIFSTTGMLHGIGKFIV). At 341 to 377 (EIICCRFRLGSYKPVNSVPFEDGHTDNHLPLLENNTH) the chain is on the cytoplasmic side.

Belongs to the ERGIC family. May form a heteromeric complex composed of ERGIC1, ERGIC2 and ERGIC3. Interacts with ERGIC3, the interaction is required for the stable expression of both proteins. May interact with EEF1A1. As to expression, ubiquitously expressed.

The protein resides in the endoplasmic reticulum-Golgi intermediate compartment membrane. The protein localises to the golgi apparatus. It localises to the cis-Golgi network membrane. It is found in the endoplasmic reticulum membrane. Its subcellular location is the cytoplasm. The protein resides in the nucleus. Functionally, possible role in transport between endoplasmic reticulum and Golgi. The sequence is that of Endoplasmic reticulum-Golgi intermediate compartment protein 2 (ERGIC2) from Homo sapiens (Human).